A 534-amino-acid polypeptide reads, in one-letter code: Cytochrome P450 monooxygenase CYP4 (534 aa).

The chain crosses the membrane as a helical span at residues 46 to 66; sequence TIIFCVLMSLVGYIVSRIIWG. N-linked (GlcNAc...) asparagine glycosylation is present at N220. C477 provides a ligand contact to heme. N515 carries an N-linked (GlcNAc...) asparagine glycan.

Belongs to the cytochrome P450 family. Heme serves as cofactor.

Its subcellular location is the membrane. It functions in the pathway secondary metabolite biosynthesis. Functionally, cytochrome P450 monooxygenase; part of the gene cluster that mediates the biosynthesis of a tyrosine-derived cytochalasan acting as a fungal signal recognized by resistant rice plants and leads to avirulence in Pi33 resistant rice cultivars. The first step in the pathway is catalyzed by the hybrid PKS-NRPS ACE1, assisted by the enoyl reductase RAP1, that are responsible for fusion of the tyrosine precursor and the polyketide backbone. The polyketide synthase module (PKS) of ACE1 is responsible for the synthesis of the polyketide backbone and the downstream nonribosomal peptide synthetase (NRPS) amidates the carboxyl end of the polyketide with the tyrosine precursor. Because ACE1 lacks a designated enoylreductase (ER) domain, the required activity is provided the enoyl reductase RAP1. Reduction by the hydrolyase ORFZ, followed by dehydration and intra-molecular Diels-Alder cyclization by the Diels-Alderase ORF3 then yield the required isoindolone-fused macrocycle. A number of oxidative steps catalyzed by the tailoring enzymes identified within the cluster, including cytochrome P450 monooxygenases CYP1 to CYP4, the FAD-linked oxidoreductase OXR2 and the short-chain dehydrogenase/reductase OXR1, are further required to afford the final cytochalasans that confer avirulence and which have still to be identified. The monooxygenase CYP1 has been shown to be a site-selective C-18 hydroxylase whereas the function of CYP3 is the site-selective epoxidation of the C-6/C-7 olefin that is present in some intermediate compounds. Finally, SYN2 and RAP2 are not required for avirulence in Pi33 resistant rice cultivars. The protein is Cytochrome P450 monooxygenase CYP4 of Pyricularia oryzae (strain 70-15 / ATCC MYA-4617 / FGSC 8958) (Rice blast fungus).